The following is a 212-amino-acid chain: Ropporin-1 (212 aa).

Positions P12 to T49 constitute an RIIa domain. A Phosphoserine modification is found at S56. An interaction with RHPN1 region spans residues V209–E212.

The protein belongs to the ropporin family. As to quaternary structure, homodimer. Interacts with AKAP3. May interact with SPA17. Interacts with RHPN1. Interacts with FSCB; the interaction increases upon spermatozoa capacitation conditions. Interacts with CFAP61. Post-translationally, sumoylated, sumoylation decreases upon spermatozoa capacitation conditions.

The protein localises to the cell projection. It is found in the cilium. It localises to the flagellum. Its function is as follows. Important for male fertility. With ROPN1L, involved in fibrous sheath integrity and sperm motility, plays a role in PKA-dependent signaling processes required for spermatozoa capacitation. In Macaca fascicularis (Crab-eating macaque), this protein is Ropporin-1 (ROPN1).